The following is a 429-amino-acid chain: Alpha-galactosidase A (429 aa).

Positions 1–31 (MQLRNPELHLGCALALRFLALVSWDIPGARA) are cleaved as a signal peptide. 2 cysteine pairs are disulfide-bonded: C52–C94 and C56–C63. An N-linked (GlcNAc...) asparagine glycan is attached at N139. The cysteines at positions 142 and 172 are disulfide-linked. The Nucleophile role is filled by D170. N192 carries N-linked (GlcNAc...) asparagine glycosylation. C202 and C223 are disulfide-bonded. Residue 203-207 (EWPLY) participates in substrate binding. The N-linked (GlcNAc...) asparagine glycan is linked to N215. Catalysis depends on D231, which acts as the Proton donor. C378 and C382 are disulfide-bonded.

This sequence belongs to the glycosyl hydrolase 27 family. In terms of assembly, homodimer.

The protein resides in the lysosome. The catalysed reaction is Hydrolysis of terminal, non-reducing alpha-D-galactose residues in alpha-D-galactosides, including galactose oligosaccharides, galactomannans and galactolipids.. The enzyme catalyses a globoside Gb3Cer (d18:1(4E)) + H2O = a beta-D-Gal-(1-&gt;4)-beta-D-Glc-(1&lt;-&gt;1)-Cer(d18:1(4E)) + D-galactose. It carries out the reaction a globoside Gb3Cer + H2O = a beta-D-galactosyl-(1-&gt;4)-beta-D-glucosyl-(1&lt;-&gt;1)-ceramide + D-galactose. Galactosylgalactosylglucosylceramidase activity is stimulated by saposin B and ammonium chloride. In terms of biological role, catalyzes the hydrolysis of glycosphingolipids and participates in their degradation in the lysosome. In Homo sapiens (Human), this protein is Alpha-galactosidase A.